The sequence spans 444 residues: N-succinylarginine dihydrolase (444 aa).

Substrate-binding positions include 19 to 28 (AGLSFGNVAS), asparagine 110, and 137 to 138 (HR). Glutamate 174 is a catalytic residue. Arginine 214 serves as a coordination point for substrate. Residue histidine 250 is part of the active site. Residues aspartate 252 and asparagine 362 each contribute to the substrate site. Residue cysteine 368 is the Nucleophile of the active site.

The protein belongs to the succinylarginine dihydrolase family. In terms of assembly, homodimer.

The catalysed reaction is N(2)-succinyl-L-arginine + 2 H2O + 2 H(+) = N(2)-succinyl-L-ornithine + 2 NH4(+) + CO2. The protein operates within amino-acid degradation; L-arginine degradation via AST pathway; L-glutamate and succinate from L-arginine: step 2/5. Its function is as follows. Catalyzes the hydrolysis of N(2)-succinylarginine into N(2)-succinylornithine, ammonia and CO(2). The polypeptide is N-succinylarginine dihydrolase (Shewanella sp. (strain ANA-3)).